Consider the following 354-residue polypeptide: ORC1-type DNA replication protein 9 (354 aa).

ATP-binding positions include 63-67 (TGKTC), Y195, and R207.

It belongs to the CDC6/cdc18 family.

Involved in regulation of DNA replication. The chain is ORC1-type DNA replication protein 9 (orc9-1) from Halobacterium salinarum (strain ATCC 700922 / JCM 11081 / NRC-1) (Halobacterium halobium).